Consider the following 469-residue polypeptide: Zinc transporter SLC39A7 (469 aa).

A helical membrane pass occupies residues 10-30 (WVAVGLLTWATLGLLVAELGG). 2 stretches are compositionally biased toward basic and acidic residues: residues 42–56 (FHGHSHRHSHEDFHH) and 66–114 (HTHE…EHSR). A disordered region spans residues 42–121 (FHGHSHRHSH…HSRGGYGESG (80 aa)). Position 66 is a pros-methylhistidine (H66). Helical transmembrane passes span 138-158 (ALGATVLISAAPFFVLFLIPV), 169-189 (LQILLSFASGGLLGDAFLHLI), and 214-234 (GPILSVGLWVLSGIVAFLVVE). A compositionally biased stretch (basic residues) spans 242 to 263 (GGHGHSHGHGHAHSHTHGSHGH). The disordered stretch occupies residues 242-310 (GGHGHSHGHG…VRPQNAEEEK (69 aa)). Residues 264 to 285 (GRQECSTKEKQSSEEEEKETRG) are compositionally biased toward basic and acidic residues. S275 and S276 each carry phosphoserine. 3 helical membrane passes run 386-406 (LTAVGALAGTACALLTEGGAV), 410-430 (IAGGAGPGWVLPFTAGGFIYV), and 448-468 (SLLEVLGLLGGVVMMVLIAHL).

The protein belongs to the ZIP transporter (TC 2.A.5) family. KE4/Catsup subfamily. As to quaternary structure, homodimer. Methylation at some His residue by METTL9 leads to reduced zinc-binding. Post-translationally, rapidly phosphorylated by CK2 following Zn(2+) treatment. This phosphorylation is required for efficient cytosolic Zn(2+) release.

The protein localises to the endoplasmic reticulum membrane. The protein resides in the golgi apparatus. Its subcellular location is the cis-Golgi network membrane. The enzyme catalyses Zn(2+)(in) = Zn(2+)(out). Transports Zn(2+) from the endoplasmic reticulum (ER)/Golgi apparatus to the cytosol, playing an essential role in the regulation of cytosolic zinc levels. Acts as a gatekeeper of zinc release from intracellular stores, requiring post-translational activation by phosphorylation, resulting in activation of multiple downstream pathways leading to cell growth and proliferation. Has an essential role in B cell development and is required for proper B cell receptor signaling. Plays an important role in maintaining intestinal epithelial homeostasis and skin dermis development by regulating ER function. Controls cell signaling pathways involved in glucose metabolism in skeletal muscle. Has a protective role against ER stress in different biological contexts. Mediates Zn(2+)-induced ferroptosis. In Pongo abelii (Sumatran orangutan), this protein is Zinc transporter SLC39A7.